Reading from the N-terminus, the 183-residue chain is Transcription factor E (183 aa).

One can recognise an HTH TFE/IIEalpha-type domain in the interval 4–97; the sequence is YIELVRRYVY…SWSIKDEDIR (94 aa).

It belongs to the TFE family. In terms of assembly, monomer. Interaction with RNA polymerase subunits RpoF and RpoE is necessary for Tfe stimulatory transcription activity. Able to interact with Tbp and RNA polymerase in the absence of DNA promoter. Interacts both with the preinitiation and elongation complexes.

In terms of biological role, transcription factor that plays a role in the activation of archaeal genes transcribed by RNA polymerase. Facilitates transcription initiation by enhancing TATA-box recognition by TATA-box-binding protein (Tbp), and transcription factor B (Tfb) and RNA polymerase recruitment. Not absolutely required for transcription in vitro, but particularly important in cases where Tbp or Tfb function is not optimal. It dynamically alters the nucleic acid-binding properties of RNA polymerases by stabilizing the initiation complex and destabilizing elongation complexes. Seems to translocate with the RNA polymerase following initiation and acts by binding to the non template strand of the transcription bubble in elongation complexes. This is Transcription factor E from Caldivirga maquilingensis (strain ATCC 700844 / DSM 13496 / JCM 10307 / IC-167).